Consider the following 200-residue polypeptide: CASP-like protein 1U2 (200 aa).

The Cytoplasmic portion of the chain corresponds to 1–33; sequence MAEPVIVVPRKGVYSDDSYHHHHRHHSFHSCTN. The chain crosses the membrane as a helical span at residues 34-54; the sequence is FLLRTLTAGATAAAVVVMLIS. Residues 55–77 are Extracellular-facing; that stretch reads TQTSGTIYGYFRGRWRDYPAYKW. Residues 78–98 form a helical membrane-spanning segment; sequence LIIANAVVFVYSVMAAIVACF. At 99–120 the chain is on the cytoplasmic side; that stretch reads SVIARRGPLSYSPSAWLTLLVD. Residues 121–141 form a helical membrane-spanning segment; sequence FLAASALISAASAALAVALLA. At 142–168 the chain is on the extracellular side; that stretch reads RNGQDLQGTHYWPTVCNYVSKFCDYTQ. The helical transmembrane segment at 169-189 threads the bilayer; the sequence is GAIIASFVGFGLLFLSTLLAA. The Cytoplasmic segment spans residues 190–200; that stretch reads SALYHLSHRRH.

Belongs to the Casparian strip membrane proteins (CASP) family. In terms of assembly, homodimer and heterodimers.

The protein localises to the cell membrane. The chain is CASP-like protein 1U2 from Physcomitrium patens (Spreading-leaved earth moss).